Reading from the N-terminus, the 260-residue chain is GDNF family receptor alpha-4 (260 aa).

Residues 1 to 23 form the signal peptide; that stretch reads MAHCMESALLLLLLLGSASFTDG. N-linked (GlcNAc...) asparagine glycosylation occurs at Asn184. Thr237 carries GPI-anchor amidated threonine lipidation. Residues 238–260 constitute a propeptide, removed in mature form; that stretch reads AGCCFPRVSWLYALTALALQALL.

The protein belongs to the GDNFR family. In terms of assembly, interacts with ARTN ligand and RET: forms a 2:2:2 ternary complex composed of ARTN ligand, GFRA3 and RET receptor. Interacts with SORL1. In terms of tissue distribution, expressed in many tissues including adrenal medulla, brain neurons, with highest levels in the cerebral cortex and hippocampus. Moderate levels found in the gut circular muscle and myenteric ganglia as well as in other peripheral ganglia, including the sensory dorsal root and trigeminal as well as superior cervical and sympathetic chain ganglia. Isoform a1, isoform a2, isoform b1 and isoform b2 are exclusively found in the thyroid, parthyroid and pituitary glands.

Its subcellular location is the cell membrane. It is found in the secreted. In terms of biological role, receptor for persephin (PSPN), a growth factor that exhibits neurotrophic activity on mesencephalic dopaminergic and motor neurons. Acts by binding to its coreceptor, GFRA4, leading to autophosphorylation and activation of the RET receptor. May be important in C-cell development and, in the postnatal development of the adrenal medulla. The chain is GDNF family receptor alpha-4 (Gfra4) from Mus musculus (Mouse).